Consider the following 217-residue polypeptide: UPF0173 metal-dependent hydrolase MJ1163 (217 aa).

This sequence belongs to the UPF0173 family.

The polypeptide is UPF0173 metal-dependent hydrolase MJ1163 (Methanocaldococcus jannaschii (strain ATCC 43067 / DSM 2661 / JAL-1 / JCM 10045 / NBRC 100440) (Methanococcus jannaschii)).